The sequence spans 216 residues: uncharacterized protein (216 aa).

Residues 54-215 (TATQPNEKWT…SPVNYRTQSL (162 aa)) enclose the Integrase catalytic domain.

It belongs to the transposase IS3/IS150/IS904 family.

This is an uncharacterized protein from Haemophilus influenzae (strain ATCC 51907 / DSM 11121 / KW20 / Rd).